The chain runs to 363 residues: Putative glutamate--cysteine ligase 2 (363 aa).

The protein belongs to the glutamate--cysteine ligase type 2 family. YbdK subfamily.

The enzyme catalyses L-cysteine + L-glutamate + ATP = gamma-L-glutamyl-L-cysteine + ADP + phosphate + H(+). In terms of biological role, ATP-dependent carboxylate-amine ligase which exhibits weak glutamate--cysteine ligase activity. The sequence is that of Putative glutamate--cysteine ligase 2 from Streptomyces coelicolor (strain ATCC BAA-471 / A3(2) / M145).